The primary structure comprises 514 residues: Glucose-6-phosphate 1-dehydrogenase 2 (514 aa).

NADP(+) contacts are provided by Arg-69 and Lys-176. Substrate-binding residues include His-206, Lys-210, Glu-244, and Asp-263. His-268 serves as the catalytic Proton acceptor. Residue Lys-366 participates in substrate binding.

Belongs to the glucose-6-phosphate dehydrogenase family.

It carries out the reaction D-glucose 6-phosphate + NADP(+) = 6-phospho-D-glucono-1,5-lactone + NADPH + H(+). Its pathway is carbohydrate degradation; pentose phosphate pathway; D-ribulose 5-phosphate from D-glucose 6-phosphate (oxidative stage): step 1/3. Its function is as follows. Catalyzes the oxidation of glucose 6-phosphate to 6-phosphogluconolactone. In Mycobacterium bovis (strain ATCC BAA-935 / AF2122/97), this protein is Glucose-6-phosphate 1-dehydrogenase 2.